The primary structure comprises 603 residues: Mitochondrial distribution and morphology protein 34 (603 aa).

Residues 1–205 (MAFNFNWSPL…SPEYQEIETE (205 aa)) enclose the SMP-LTD domain. Over residues 320 to 332 (KSGASSVASGSTG) the composition is skewed to low complexity. 2 disordered regions span residues 320–511 (KSGA…PLLR) and 558–603 (IARK…AYVA). Polar residues predominate over residues 333–351 (NETLSSRPTLASSYSTSAG). Basic and acidic residues predominate over residues 371–380 (VVDLRRKDGA). A compositionally biased stretch (polar residues) spans 383-403 (GVSTEANTPLPSTQVSDTSSV). Over residues 452 to 463 (PLLAPAPLIPNA) the composition is skewed to low complexity. Positions 500–509 (RQAQQSTSPL) are enriched in polar residues. Basic and acidic residues predominate over residues 558 to 570 (IARKVQEEKDKSS).

Belongs to the MDM34 family. In terms of assembly, component of the ER-mitochondria encounter structure (ERMES) or MDM complex, composed of mmm1, mdm10, mdm12 and mdm34.

Its subcellular location is the mitochondrion outer membrane. In terms of biological role, component of the ERMES/MDM complex, which serves as a molecular tether to connect the endoplasmic reticulum (ER) and mitochondria. Components of this complex are involved in the control of mitochondrial shape and protein biogenesis, and function in nonvesicular lipid trafficking between the ER and mitochondria. Mdm34 is required for the interaction of the ER-resident membrane protein mmm1 and the outer mitochondrial membrane-resident beta-barrel protein mdm10. The protein is Mitochondrial distribution and morphology protein 34 of Pyrenophora tritici-repentis (strain Pt-1C-BFP) (Wheat tan spot fungus).